Here is a 315-residue protein sequence, read N- to C-terminus: Ribosomal protein L11 methyltransferase (315 aa).

4 residues coordinate S-adenosyl-L-methionine: Thr164, Gly185, Asp207, and Asn249.

It belongs to the methyltransferase superfamily. PrmA family.

It is found in the cytoplasm. The catalysed reaction is L-lysyl-[protein] + 3 S-adenosyl-L-methionine = N(6),N(6),N(6)-trimethyl-L-lysyl-[protein] + 3 S-adenosyl-L-homocysteine + 3 H(+). Its function is as follows. Methylates ribosomal protein L11. The polypeptide is Ribosomal protein L11 methyltransferase (Lactobacillus gasseri (strain ATCC 33323 / DSM 20243 / BCRC 14619 / CIP 102991 / JCM 1131 / KCTC 3163 / NCIMB 11718 / NCTC 13722 / AM63)).